A 99-amino-acid chain; its full sequence is Small ribosomal subunit protein uS14c (99 aa).

The segment at 46-66 (LQSSPRNSAPTRLHRRCSSTG) is disordered.

It belongs to the universal ribosomal protein uS14 family. In terms of assembly, part of the 30S ribosomal subunit.

Its subcellular location is the plastid. The protein localises to the chloroplast. Binds 16S rRNA, required for the assembly of 30S particles. This is Small ribosomal subunit protein uS14c from Pinus thunbergii (Japanese black pine).